Consider the following 205-residue polypeptide: Holliday junction branch migration complex subunit RuvA (205 aa).

The tract at residues 1 to 64 (MIGRLRGVLV…EDAQLLYGFI (64 aa)) is domain I. Residues 65-143 (TKQERALFRL…SLMEASAGSE (79 aa)) form a domain II region. The segment at 144-156 (REFVLQSNYSPTP) is flexible linker. Residues 157–205 (TVNSAEEDAISALISLGYKPPQASKSVSAAYKEGMDSETLIKAALKSML) form a domain III region.

The protein belongs to the RuvA family. As to quaternary structure, homotetramer. Forms an RuvA(8)-RuvB(12)-Holliday junction (HJ) complex. HJ DNA is sandwiched between 2 RuvA tetramers; dsDNA enters through RuvA and exits via RuvB. An RuvB hexamer assembles on each DNA strand where it exits the tetramer. Each RuvB hexamer is contacted by two RuvA subunits (via domain III) on 2 adjacent RuvB subunits; this complex drives branch migration. In the full resolvosome a probable DNA-RuvA(4)-RuvB(12)-RuvC(2) complex forms which resolves the HJ.

It localises to the cytoplasm. Its function is as follows. The RuvA-RuvB-RuvC complex processes Holliday junction (HJ) DNA during genetic recombination and DNA repair, while the RuvA-RuvB complex plays an important role in the rescue of blocked DNA replication forks via replication fork reversal (RFR). RuvA specifically binds to HJ cruciform DNA, conferring on it an open structure. The RuvB hexamer acts as an ATP-dependent pump, pulling dsDNA into and through the RuvAB complex. HJ branch migration allows RuvC to scan DNA until it finds its consensus sequence, where it cleaves and resolves the cruciform DNA. This Shewanella sp. (strain W3-18-1) protein is Holliday junction branch migration complex subunit RuvA.